An 864-amino-acid chain; its full sequence is DNA mismatch repair protein MutS (864 aa).

607–614 contributes to the ATP binding site; that stretch reads GPNMGGKS.

The protein belongs to the DNA mismatch repair MutS family.

Its function is as follows. This protein is involved in the repair of mismatches in DNA. It is possible that it carries out the mismatch recognition step. This protein has a weak ATPase activity. The sequence is that of DNA mismatch repair protein MutS from Neisseria meningitidis serogroup C (strain 053442).